A 285-amino-acid chain; its full sequence is 1,4-dihydroxy-2-naphthoyl-CoA synthase (285 aa).

Substrate-binding positions include arginine 45, 84–89 (SGGDQK), tyrosine 97, 129–133 (YSIGG), threonine 155, serine 161, tyrosine 258, and lysine 273. Residue 154 to 156 (QTG) participates in hydrogencarbonate binding.

It belongs to the enoyl-CoA hydratase/isomerase family. MenB subfamily. As to quaternary structure, homohexamer. Dimer of a homotrimer. The cofactor is hydrogencarbonate.

The enzyme catalyses 2-succinylbenzoyl-CoA + H(+) = 1,4-dihydroxy-2-naphthoyl-CoA + H2O. It functions in the pathway quinol/quinone metabolism; 1,4-dihydroxy-2-naphthoate biosynthesis; 1,4-dihydroxy-2-naphthoate from chorismate: step 6/7. Its pathway is quinol/quinone metabolism; menaquinone biosynthesis. Its activity is regulated as follows. Inhibited by sulfite and nitrate. Functionally, converts o-succinylbenzoyl-CoA (OSB-CoA) to 1,4-dihydroxy-2-naphthoyl-CoA (DHNA-CoA). The protein is 1,4-dihydroxy-2-naphthoyl-CoA synthase of Escherichia coli (strain K12).